The following is an 83-amino-acid chain: Small ribosomal subunit protein bS21 (83 aa).

Residues 40–83 are disordered; it reads TPMDERRRKARSASKRNKVKWRYSNKSEETASETAETPASAPEA. A compositionally biased stretch (basic residues) spans 47 to 62; the sequence is RKARSASKRNKVKWRY. Low complexity predominate over residues 71–83; it reads SETAETPASAPEA.

The protein belongs to the bacterial ribosomal protein bS21 family.

This is Small ribosomal subunit protein bS21 from Akkermansia muciniphila (strain ATCC BAA-835 / DSM 22959 / JCM 33894 / BCRC 81048 / CCUG 64013 / CIP 107961 / Muc).